A 281-amino-acid chain; its full sequence is Leukocyte antigen CD37 (281 aa).

Over 1 to 17 (MSAQESCLSLIKYFLFV) the chain is Cytoplasmic. The helical transmembrane segment at 18–38 (FNLFFFVLGGLIFCFGTWILI) threads the bilayer. Residues 39–59 (DKTSFVSFVGLSFVPLQTWSK) lie on the Extracellular side of the membrane. The helical transmembrane segment at 60 to 74 (VLAVSGVLTMALALL) threads the bilayer. Over 75 to 85 (GCVGALKELRC) the chain is Cytoplasmic. Residues 86-111 (LLGLYFGMLLLLFATQITLGILISTQ) traverse the membrane as a helical segment. Topologically, residues 112–241 (RVRLERRVQE…QSLQKWLHNN (130 aa)) are extracellular. Residues Asn-170, Asn-183, and Asn-188 are each glycosylated (N-linked (GlcNAc...) asparagine). Residues 242–266 (IISIVGICLGVGLLELGFMTLSIFL) form a helical membrane-spanning segment. Residues 267–281 (CRNLDHVYDRLARYR) are Cytoplasmic-facing.

The protein belongs to the tetraspanin (TM4SF) family. Interacts with SCIMP. Interacts with SOCS3. Interacts with DECTIN1/CLEC7A. Tyrosine phosphorylated; leading to activation of downstream signaling pathways.

It is found in the cell membrane. In terms of biological role, structural component of specialized membrane microdomains known as tetraspanin-enriched microdomains (TERMs), which act as platforms for receptor clustering and signaling. Participates thereby in diverse biological functions such as cell signal transduction, adhesion, migration and protein trafficking. Upon ligand binding, two signaling pathways are activated, one acting through phosphorylation by LYN leading to cell death or a survival pathway with activation of GSK3B. Plays an essential role for clustering of integrin ITGA4/ITGB1 and promotes its mobility in the plasma membrane of B-cells. In turn, participates in ITGA4/ITGB1 integrin-mediated antiapoptotic signaling through AKT. Also plays a role in the migration of dendritic cells and neutrophils to draining lymph nodes, as well as in their integrin-mediated adhesion. Negatively regulates IL-6 responses through direct interaction with SOCS3 thereby preventing constitutive IL-6 signaling. Alternatively, inhibition of IL-6 signaling can also occur via interaction and stabilization of DECTIN1/CLEC7A at the cell membrane to inhibit its ability to promote the production of IL-6. This Mus musculus (Mouse) protein is Leukocyte antigen CD37 (Cd37).